The primary structure comprises 1612 residues: DNA (cytosine-5)-methyltransferase PliMCI (1612 aa).

The 95-residue stretch at 7-101 folds into the DMAP1-binding domain; the sequence is CDQVIPPNVR…NGDTKEEASS (95 aa). The disordered stretch occupies residues 87 to 338; it reads TCSPVNGDTK…TAESKQPPLR (252 aa). Basic and acidic residues predominate over residues 94–110; sequence DTKEEASSNGKDDEKAE. Residues 115–131 are compositionally biased toward low complexity; that stretch reads NGTTSNGSTTNGSSGSS. Polar residues predominate over residues 132–142; it reads KANGHTNGGYV. The span at 143–154 shows a compositional bias: low complexity; the sequence is QSSSQEETGTSQ. Composition is skewed to basic and acidic residues over residues 193–212, 222–232, and 260–289; these read VLGD…KKDV, EESATPDEKTL, and KKEE…KKEE. Residues 626 to 672 form a CXXC-type zinc finger; it reads ASERKKRCGVCEICQAPDCGKCTACKDMIKFGGSGKAKQACKDRRCP. Positions 633, 636, 639, 644, 647, 650, 666, and 671 each coordinate Zn(2+). Positions 677 to 708 are disordered; the sequence is QEADENDIDEMDNSSNKENKDEKKAKKGRKLE. Over residues 678 to 688 the composition is skewed to acidic residues; it reads EADENDIDEMD. Residues 691–708 show a composition bias toward basic and acidic residues; it reads SNKENKDEKKAKKGRKLE. 2 consecutive BAH domains span residues 743-871 and 967-1089; these read EKIE…EDYE and NYRK…EDPP. The tract at residues 1084-1121 is disordered; sequence CFEDPPSKSRSTRMKGKGKGKGKGKAKGKIAVEKEEEK. The segment covering 1093 to 1111 has biased composition (basic residues); the sequence is RSTRMKGKGKGKGKGKAKG. The SAM-dependent MTase C5-type domain maps to 1131 to 1590; sequence LKCLDVFAGC…MEIKVCLQTK (460 aa). Residues 1142–1143, 1160–1161, 1182–1183, and Cys1183 each bind S-adenosyl-L-methionine; these read GL, EK, and DC. Residue Cys1218 is part of the active site. S-adenosyl-L-methionine-binding residues include Asn1569 and Val1571.

This sequence belongs to the class I-like SAM-binding methyltransferase superfamily. C5-methyltransferase family.

Its subcellular location is the nucleus. The enzyme catalyses a 2'-deoxycytidine in DNA + S-adenosyl-L-methionine = a 5-methyl-2'-deoxycytidine in DNA + S-adenosyl-L-homocysteine + H(+). In terms of biological role, methylates CpG residues. The sequence is that of DNA (cytosine-5)-methyltransferase PliMCI (DNMT) from Paracentrotus lividus (Common sea urchin).